A 435-amino-acid polypeptide reads, in one-letter code: Probable tRNA pseudouridine synthase D (435 aa).

Asp95 functions as the Nucleophile in the catalytic mechanism. Residues 170 to 396 (GVPNYFGTQR…SSGTRRAVLV (227 aa)) enclose the TRUD domain.

The protein belongs to the pseudouridine synthase TruD family.

It catalyses the reaction uridine(13) in tRNA = pseudouridine(13) in tRNA. In terms of biological role, could be responsible for synthesis of pseudouridine from uracil-13 in transfer RNAs. This chain is Probable tRNA pseudouridine synthase D, found in Natronomonas pharaonis (strain ATCC 35678 / DSM 2160 / CIP 103997 / JCM 8858 / NBRC 14720 / NCIMB 2260 / Gabara) (Halobacterium pharaonis).